The primary structure comprises 122 residues: Large ribosomal subunit protein uL14 (122 aa).

It belongs to the universal ribosomal protein uL14 family. Part of the 50S ribosomal subunit. Forms a cluster with proteins L3 and L19. In the 70S ribosome, L14 and L19 interact and together make contacts with the 16S rRNA in bridges B5 and B8.

Functionally, binds to 23S rRNA. Forms part of two intersubunit bridges in the 70S ribosome. The polypeptide is Large ribosomal subunit protein uL14 (Endomicrobium trichonymphae).